Here is a 269-residue protein sequence, read N- to C-terminus: Phosphate import ATP-binding protein PstB (269 aa).

The ABC transporter domain maps to 14-253 (LSLENVSISY…EFNSTKKIFN (240 aa)). Position 46–53 (46–53 (GPSGCGKS)) interacts with ATP.

It belongs to the ABC transporter superfamily. Phosphate importer (TC 3.A.1.7) family. In terms of assembly, the complex is composed of two ATP-binding proteins (PstB), two transmembrane proteins (PstC and PstA) and a solute-binding protein (PstS).

The protein resides in the cell inner membrane. It carries out the reaction phosphate(out) + ATP + H2O = ADP + 2 phosphate(in) + H(+). Functionally, part of the ABC transporter complex PstSACB involved in phosphate import. Responsible for energy coupling to the transport system. The sequence is that of Phosphate import ATP-binding protein PstB from Prochlorococcus marinus (strain MIT 9312).